The following is a 61-amino-acid chain: Transmembrane protein 300R (61 aa).

2 consecutive transmembrane segments (helical) span residues 5–25 (FLDL…FYLT) and 35–55 (SLSY…IYLQ).

It is found in the membrane. The protein is Transmembrane protein 300R of Invertebrate iridescent virus 6 (IIV-6).